The following is a 152-amino-acid chain: Transcriptional repressor NrdR (152 aa).

The segment at 3–34 (CPKCTSIEDKVIDSRISKEGSTIRRRRECLEC) is a zinc-finger region. Residues 49 to 139 (IVVIKRDGRR…VYKEFRDVSE (91 aa)) enclose the ATP-cone domain.

This sequence belongs to the NrdR family. Zn(2+) serves as cofactor.

Functionally, negatively regulates transcription of bacterial ribonucleotide reductase nrd genes and operons by binding to NrdR-boxes. The sequence is that of Transcriptional repressor NrdR from Opitutus terrae (strain DSM 11246 / JCM 15787 / PB90-1).